A 376-amino-acid polypeptide reads, in one-letter code: Alanine racemase (376 aa).

The active-site Proton acceptor; specific for D-alanine is the Lys-36. Position 36 is an N6-(pyridoxal phosphate)lysine (Lys-36). A substrate-binding site is contributed by Arg-134. The Proton acceptor; specific for L-alanine role is filled by Tyr-266. Met-314 serves as a coordination point for substrate.

Belongs to the alanine racemase family. Pyridoxal 5'-phosphate serves as cofactor.

The catalysed reaction is L-alanine = D-alanine. It functions in the pathway amino-acid biosynthesis; D-alanine biosynthesis; D-alanine from L-alanine: step 1/1. Catalyzes the interconversion of L-alanine and D-alanine. May also act on other amino acids. The sequence is that of Alanine racemase (alr) from Nitratidesulfovibrio vulgaris (strain ATCC 29579 / DSM 644 / CCUG 34227 / NCIMB 8303 / VKM B-1760 / Hildenborough) (Desulfovibrio vulgaris).